The sequence spans 214 residues: uncharacterized protein (214 aa).

Residues 1–49 constitute a chloroplast transit peptide; that stretch reads MATRGAVAAAASTIWKHRRNPSLRSLSRHFNPNFNHRIIPTGFKYQVRA.

Its subcellular location is the plastid. The protein resides in the chloroplast. This is an uncharacterized protein from Arabidopsis thaliana (Mouse-ear cress).